We begin with the raw amino-acid sequence, 490 residues long: MRINPTTSGSEVSAVEKKNLGRIVKIIGPVLDVAFPPGKMPNIYNALVVQGRDNEQTNVTCEVQQLLGNNRVRAVAMSDTDGLMRGMGVIDTGAPISVPVGGSTLGRIFNVLGQPVDNLGPVDTNTTSPIHRSAPAFIQLDTKLSIFETGIKVVDLLAPYRRGGKIGLFGGAGVGKTVLIMELINNIAKAHGGVSVFGGVGERTREGNDLYLEMKESGVINEENIPESKVALVYGQMNEPPGARMRVGLTALTMAEYFRDVNEQDVLLFIDNIFRFVQAGSEVSALLGRMPSAVGYQPTLSTEMGSLQERITSTKEGSITSIQAVYVPADDLTDPAPATTFAHLDATTVLSRGLAAKGIYPAVDPLDSTSTMLQPRIVGEEHYETAQRVKQTLQRYKELQDIIAILGLDELSEEDRLTVARARKIERFLSQPFFVAEVFTGSPGKYVGLAETIRGFQLILSGELDGLPEQAFYLVGNIDEATAKAMNLKT.

Gly170–Thr177 lines the ATP pocket.

The protein belongs to the ATPase alpha/beta chains family. In terms of assembly, F-type ATPases have 2 components, CF(1) - the catalytic core - and CF(0) - the membrane proton channel. CF(1) has five subunits: alpha(3), beta(3), gamma(1), delta(1), epsilon(1). CF(0) has four main subunits: a(1), b(1), b'(1) and c(9-12).

It localises to the plastid. Its subcellular location is the chloroplast thylakoid membrane. It catalyses the reaction ATP + H2O + 4 H(+)(in) = ADP + phosphate + 5 H(+)(out). In terms of biological role, produces ATP from ADP in the presence of a proton gradient across the membrane. The catalytic sites are hosted primarily by the beta subunits. This chain is ATP synthase subunit beta, chloroplastic, found in Ipomoea wrightii (Wright's morning glory).